The primary structure comprises 485 residues: ATP-dependent protease ATPase subunit HslU (485 aa).

ATP contacts are provided by residues Ile22 and 64–69; that span reads GVGKTE. The tract at residues 146-189 is disordered; sequence KKTAATSAQPQDVSQASSGTTISLPSVSSTAQAEEHKAQNENDM. Polar residues predominate over residues 149 to 177; sequence AATSAQPQDVSQASSGTTISLPSVSSTAQ. Positions 178–189 are enriched in basic and acidic residues; the sequence is AEEHKAQNENDM. 3 residues coordinate ATP: Asp297, Glu363, and Arg435.

The protein belongs to the ClpX chaperone family. HslU subfamily. As to quaternary structure, a double ring-shaped homohexamer of HslV is capped on each side by a ring-shaped HslU homohexamer. The assembly of the HslU/HslV complex is dependent on binding of ATP.

The protein resides in the cytoplasm. ATPase subunit of a proteasome-like degradation complex; this subunit has chaperone activity. The binding of ATP and its subsequent hydrolysis by HslU are essential for unfolding of protein substrates subsequently hydrolyzed by HslV. HslU recognizes the N-terminal part of its protein substrates and unfolds these before they are guided to HslV for hydrolysis. The sequence is that of ATP-dependent protease ATPase subunit HslU from Treponema denticola (strain ATCC 35405 / DSM 14222 / CIP 103919 / JCM 8153 / KCTC 15104).